A 360-amino-acid polypeptide reads, in one-letter code: Chorismate synthase (360 aa).

The NADP(+) site is built by Arg48 and Arg54. Residues 125–127 (RSS), 246–247 (NA), Gly286, 301–305 (KPTSS), and Arg327 each bind FMN.

This sequence belongs to the chorismate synthase family. Homotetramer. The cofactor is FMNH2.

It catalyses the reaction 5-O-(1-carboxyvinyl)-3-phosphoshikimate = chorismate + phosphate. It participates in metabolic intermediate biosynthesis; chorismate biosynthesis; chorismate from D-erythrose 4-phosphate and phosphoenolpyruvate: step 7/7. Functionally, catalyzes the anti-1,4-elimination of the C-3 phosphate and the C-6 proR hydrogen from 5-enolpyruvylshikimate-3-phosphate (EPSP) to yield chorismate, which is the branch point compound that serves as the starting substrate for the three terminal pathways of aromatic amino acid biosynthesis. This reaction introduces a second double bond into the aromatic ring system. This chain is Chorismate synthase, found in Glaesserella parasuis serovar 5 (strain SH0165) (Haemophilus parasuis).